Here is a 367-residue protein sequence, read N- to C-terminus: Phosphoribosylaminoimidazole-succinocarboxamide synthase (367 aa).

It belongs to the SAICAR synthetase family.

The enzyme catalyses 5-amino-1-(5-phospho-D-ribosyl)imidazole-4-carboxylate + L-aspartate + ATP = (2S)-2-[5-amino-1-(5-phospho-beta-D-ribosyl)imidazole-4-carboxamido]succinate + ADP + phosphate + 2 H(+). It functions in the pathway purine metabolism; IMP biosynthesis via de novo pathway; 5-amino-1-(5-phospho-D-ribosyl)imidazole-4-carboxamide from 5-amino-1-(5-phospho-D-ribosyl)imidazole-4-carboxylate: step 1/2. In Psychromonas ingrahamii (strain DSM 17664 / CCUG 51855 / 37), this protein is Phosphoribosylaminoimidazole-succinocarboxamide synthase.